We begin with the raw amino-acid sequence, 341 residues long: tRNA N6-adenosine threonylcarbamoyltransferase (341 aa).

Residues histidine 111 and histidine 115 each coordinate Fe cation. Substrate is bound by residues 134-138 (LVSGG), aspartate 167, glycine 180, and asparagine 276. Position 304 (aspartate 304) interacts with Fe cation.

The protein belongs to the KAE1 / TsaD family. Fe(2+) is required as a cofactor.

The protein localises to the cytoplasm. The catalysed reaction is L-threonylcarbamoyladenylate + adenosine(37) in tRNA = N(6)-L-threonylcarbamoyladenosine(37) in tRNA + AMP + H(+). Required for the formation of a threonylcarbamoyl group on adenosine at position 37 (t(6)A37) in tRNAs that read codons beginning with adenine. Is involved in the transfer of the threonylcarbamoyl moiety of threonylcarbamoyl-AMP (TC-AMP) to the N6 group of A37, together with TsaE and TsaB. TsaD likely plays a direct catalytic role in this reaction. The polypeptide is tRNA N6-adenosine threonylcarbamoyltransferase (Stutzerimonas stutzeri (strain A1501) (Pseudomonas stutzeri)).